Consider the following 242-residue polypeptide: Polycomb group RING finger protein 3 (242 aa).

The segment at 17–56 (CRLCNGYLIDATTVTECLHTFCRSCLVKYLEENNTCPTCR) adopts an RING-type zinc-finger fold. Residues 120 to 149 (EAHRNGETKTDEHTHKEPPEEKQEEDHDYH) form a disordered region.

Component of a PRC1-like complex.

The protein resides in the nucleus. In terms of biological role, component of a Polycomb group (PcG) multiprotein PRC1-like complex, a complex class required to maintain the transcriptionally repressive state of many genes, including Hox genes, throughout development. PcG PRC1 complex acts via chromatin remodeling and modification of histones; it mediates monoubiquitination of histone H2A 'Lys-119', rendering chromatin heritably changed in its expressibility. Within the PRC1-like complex, regulates RNF2 ubiquitin ligase activity. In Xenopus tropicalis (Western clawed frog), this protein is Polycomb group RING finger protein 3 (pcgf3).